Reading from the N-terminus, the 146-residue chain is Ribosome maturation factor RimP (146 aa).

It belongs to the RimP family.

It localises to the cytoplasm. In terms of biological role, required for maturation of 30S ribosomal subunits. The protein is Ribosome maturation factor RimP of Helicobacter pylori (strain Shi470).